The chain runs to 661 residues: MKDRFELVSNYQPQGDQPKAIDQLVKGINEGRKHQTLLGATGTGKTFTMSNVIKEVNKPTLVIAHNKTLAGQLYSEFKEFFPNNAVEYFVSYYDYYQPEAYVPQTDTFIEKDASINDEIDKLRHSATSALFERKDVIIVASVSCIYGLGSPEEYREMVLSLRTEMEIERNELLRKLVDIQYARNDIDFQRGTFRVRGDVVEIFPASRDEHCVRVEFFGDEIERIREVDALTGEILGEREHVAIFPASHFVTREEKMKKAIINIEEELEERLKALREEGKLLEAQRLEQRTRYDLEMMREMGFCSGIENYSRHLTLRPAGSTPYTLLDYFPDDFLMVIDESHVTIPQIRGMYNGDQARKQVLVDHGFRLPSALDNRPLRFEEFEKHIHNIVYVSATPGPYELEHTPEMVEQIIRPTGLLDPIIEVRPIEGQIDDLIGEIQQRIERNERVLVTTLTKKMSEDLTDYLKEIGIKVTYLHSEIKTLERIEIIRDLRLGKHDVLVGINLLREGLDIPEVSLVAILDADKEGFLRSERSLIQTIGRAARNAEGRVIMYADKITNSMEIAINETKRRREQQEAYNEKHGITPKTINKKIRDVIRATHAAEDQEEYQVKEEPKLSKMTKKEREKVIAQMESDMKEAAKALDFERAAELRDLLLELKSEG.

Residues 26–413 (KGINEGRKHQ…TPEMVEQIIR (388 aa)) enclose the Helicase ATP-binding domain. 39-46 (GATGTGKT) provides a ligand contact to ATP. The Beta-hairpin motif lies at 92-115 (YYDYYQPEAYVPQTDTFIEKDASI). Positions 430–596 (QIDDLIGEIQ…TINKKIRDVI (167 aa)) constitute a Helicase C-terminal domain. The 36-residue stretch at 625–660 (EKVIAQMESDMKEAAKALDFERAAELRDLLLELKSE) folds into the UVR domain.

The protein belongs to the UvrB family. In terms of assembly, forms a heterotetramer with UvrA during the search for lesions. Interacts with UvrC in an incision complex.

It localises to the cytoplasm. Functionally, the UvrABC repair system catalyzes the recognition and processing of DNA lesions. A damage recognition complex composed of 2 UvrA and 2 UvrB subunits scans DNA for abnormalities. Upon binding of the UvrA(2)B(2) complex to a putative damaged site, the DNA wraps around one UvrB monomer. DNA wrap is dependent on ATP binding by UvrB and probably causes local melting of the DNA helix, facilitating insertion of UvrB beta-hairpin between the DNA strands. Then UvrB probes one DNA strand for the presence of a lesion. If a lesion is found the UvrA subunits dissociate and the UvrB-DNA preincision complex is formed. This complex is subsequently bound by UvrC and the second UvrB is released. If no lesion is found, the DNA wraps around the other UvrB subunit that will check the other stand for damage. The chain is UvrABC system protein B from Bacillus licheniformis (strain ATCC 14580 / DSM 13 / JCM 2505 / CCUG 7422 / NBRC 12200 / NCIMB 9375 / NCTC 10341 / NRRL NRS-1264 / Gibson 46).